The following is a 346-amino-acid chain: Tetraacyldisaccharide 4'-kinase (346 aa).

Threonine 54 to threonine 61 contributes to the ATP binding site.

Belongs to the LpxK family.

The enzyme catalyses a lipid A disaccharide + ATP = a lipid IVA + ADP + H(+). It functions in the pathway glycolipid biosynthesis; lipid IV(A) biosynthesis; lipid IV(A) from (3R)-3-hydroxytetradecanoyl-[acyl-carrier-protein] and UDP-N-acetyl-alpha-D-glucosamine: step 6/6. In terms of biological role, transfers the gamma-phosphate of ATP to the 4'-position of a tetraacyldisaccharide 1-phosphate intermediate (termed DS-1-P) to form tetraacyldisaccharide 1,4'-bis-phosphate (lipid IVA). In Sinorhizobium fredii (strain NBRC 101917 / NGR234), this protein is Tetraacyldisaccharide 4'-kinase.